We begin with the raw amino-acid sequence, 298 residues long: Probable endonuclease 4 (298 aa).

9 residues coordinate Zn(2+): histidine 69, histidine 111, glutamate 146, aspartate 180, histidine 183, histidine 215, aspartate 228, histidine 230, and glutamate 260.

The protein belongs to the AP endonuclease 2 family. The cofactor is Zn(2+).

It catalyses the reaction Endonucleolytic cleavage to 5'-phosphooligonucleotide end-products.. In terms of biological role, endonuclease IV plays a role in DNA repair. It cleaves phosphodiester bonds at apurinic or apyrimidinic (AP) sites, generating a 3'-hydroxyl group and a 5'-terminal sugar phosphate. The sequence is that of Probable endonuclease 4 from Bacillus cytotoxicus (strain DSM 22905 / CIP 110041 / 391-98 / NVH 391-98).